The sequence spans 716 residues: Lamin-like protein (716 aa).

2 stretches are compositionally biased toward basic residues: residues 1-10 (MDMSKKKSKR) and 35-45 (KKTKTTTKKKA). Residues 1–107 (MDMSKKKSKR…TIQSIPTTPI (107 aa)) are disordered. Low complexity predominate over residues 62 to 107 (ITTTTTSTSTTNNNNITTTSTSSQQSNGTLSSSSSPTIQSIPTTPI). Positions 130–450 (LREKDELSLI…KMRKQMADLK (321 aa)) form a coiled coil. The region spanning 132–515 (EKDELSLIHN…ELVKGFEKTV (384 aa)) is the IF rod domain. The short motif at 519–522 (KRKR) is the Nuclear localization signal element. The disordered stretch occupies residues 519 to 584 (KRKRSKLQHE…PTGPEQSELF (66 aa)). Polar residues predominate over residues 532–545 (AANQDQNGMTIEEQ). A compositionally biased stretch (low complexity) spans 546–564 (SSTSTTTTTSATGSSSSTS). Over residues 565–584 (HLDNIDSSKLPTGPEQSELF) the composition is skewed to polar residues. The LTD domain maps to 575–698 (PTGPEQSELF…EETTTVTLPA (124 aa)). The CAAX motif signature appears at 713–716 (CLIM).

Belongs to the intermediate filament family. As to quaternary structure, homodimer. Lamin dimers then assemble into dimeric head-to-tail polymers. Ultimately, two head-to-tail polymers assemble laterally into a protofilament with a uniformly shaped rod of 3.5 nm in diameter.

It localises to the nucleus lamina. Its subcellular location is the nucleus envelope. The protein resides in the nucleus inner membrane. In terms of biological role, lamins are intermediate filament proteins that assemble into a filamentous meshwork, and which constitute the major components of the nuclear lamina, a fibrous layer on the nucleoplasmic side of the inner nuclear membrane. Lamins provide a framework for the nuclear envelope, bridging the nuclear envelope and chromatin, thereby playing an important role in nuclear assembly, chromatin organization, nuclear membrane and telomere dynamics. The structural integrity of the lamina is strictly controlled by the cell cycle, as seen by the disintegration and formation of the nuclear envelope in prophase and telophase, respectively. Helps to maintain integrity of nuclear structures in response to mechanical stress. This chain is Lamin-like protein, found in Dictyostelium discoideum (Social amoeba).